The following is a 204-amino-acid chain: Somatotropin (204 aa).

Residues 1–17 form the signal peptide; sequence MDKVLFLLFVLSLGVSS. Gln18 is modified (pyrrolidone carboxylic acid). Residue His36 participates in Zn(2+) binding. Cys69 and Cys177 are disulfide-bonded. A Zn(2+)-binding site is contributed by Glu186. A disulfide bond links Cys194 and Cys202.

It belongs to the somatotropin/prolactin family.

The protein localises to the secreted. In terms of biological role, growth hormone plays an important role in growth control and is involved in the regulation of several anabolic processes. Implicated as an osmoregulatory substance important for seawater adaptation. The chain is Somatotropin (gh) from Trichopodus trichopterus (Three spot gourami).